We begin with the raw amino-acid sequence, 193 residues long: MSSHLARLEALLFVAGEDGLSLRTMAQLLEIPVTGLTQSLEKLQAKYEADEDTALCLLESSNTYKIVTKPDFACLLRDYSKTPINQSLSRASLEVLSIVAYKQPITRAEVDDIRGVNSSGAIAKLQAFGLIREAGKKDAVGRPNLYATTDYFLDYIGINSLDELVAIDQLELEEQETSLFREDAPEDLEDLDN.

It belongs to the ScpB family. As to quaternary structure, homodimer. Homodimerization may be required to stabilize the binding of ScpA to the Smc head domains. Component of a cohesin-like complex composed of ScpA, ScpB and the Smc homodimer, in which ScpA and ScpB bind to the head domain of Smc. The presence of the three proteins is required for the association of the complex with DNA.

Its subcellular location is the cytoplasm. Participates in chromosomal partition during cell division. May act via the formation of a condensin-like complex containing Smc and ScpA that pull DNA away from mid-cell into both cell halves. In Streptococcus thermophilus (strain ATCC BAA-250 / LMG 18311), this protein is Segregation and condensation protein B.